The following is a 1097-amino-acid chain: Transmembrane protein 132D (1097 aa).

The first 30 residues, 1-30, serve as a signal peptide directing secretion; sequence MCPSEMGTLWYLWSPVLISLAALFSKVTEG. Topologically, residues 31 to 913 are extracellular; that stretch reads RGILESIQRF…LDQAAKGLSD (883 aa). Positions 233-245 are enriched in basic and acidic residues; the sequence is DERGDCAKEDSRK. The tract at residues 233–263 is disordered; the sequence is DERGDCAKEDSRKSGGTPAGHNDVDESSPPL. A helical transmembrane segment spans residues 914-934; the sequence is LEIGMYALLGVFCLAILVFLI. The Cytoplasmic segment spans residues 935-1097; sequence NCVTFALKYR…SCMERLHEHV (163 aa). The segment at 1021–1042 is disordered; the sequence is MLTDDQEQKSEPPTSPTSKRKR.

It belongs to the TMEM132 family. Expressed in mature oligodendrocytes in the white and gray matter of the brain.

The protein resides in the membrane. Regulates neuronal morphology via inhibition of the WAVE regulatory complex (WCR), a complex that controls F-actin cytoskeletal dynamics. The protein is Transmembrane protein 132D (Tmem132d) of Mus musculus (Mouse).